The sequence spans 119 residues: Large ribosomal subunit protein uL18 (119 aa).

The protein belongs to the universal ribosomal protein uL18 family. As to quaternary structure, part of the 50S ribosomal subunit; part of the 5S rRNA/L5/L18/L25 subcomplex. Contacts the 5S and 23S rRNAs.

Functionally, this is one of the proteins that bind and probably mediate the attachment of the 5S RNA into the large ribosomal subunit, where it forms part of the central protuberance. In Ruegeria sp. (strain TM1040) (Silicibacter sp.), this protein is Large ribosomal subunit protein uL18.